A 208-amino-acid polypeptide reads, in one-letter code: Glycerol-3-phosphate acyltransferase (208 aa).

Helical transmembrane passes span 7 to 27, 63 to 83, 86 to 106, 123 to 143, 149 to 169, and 170 to 190; these read PNIH…GYLL, MMAA…ILVA, AGMS…GHCF, GVMA…WLVV, ISSL…FLIH, and PEIP…VIFY.

It belongs to the PlsY family. In terms of assembly, probably interacts with PlsX.

The protein resides in the cell inner membrane. The enzyme catalyses an acyl phosphate + sn-glycerol 3-phosphate = a 1-acyl-sn-glycero-3-phosphate + phosphate. The protein operates within lipid metabolism; phospholipid metabolism. In terms of biological role, catalyzes the transfer of an acyl group from acyl-phosphate (acyl-PO(4)) to glycerol-3-phosphate (G3P) to form lysophosphatidic acid (LPA). This enzyme utilizes acyl-phosphate as fatty acyl donor, but not acyl-CoA or acyl-ACP. The sequence is that of Glycerol-3-phosphate acyltransferase from Wolinella succinogenes (strain ATCC 29543 / DSM 1740 / CCUG 13145 / JCM 31913 / LMG 7466 / NCTC 11488 / FDC 602W) (Vibrio succinogenes).